A 106-amino-acid polypeptide reads, in one-letter code: Aspartyl/glutamyl-tRNA(Asn/Gln) amidotransferase subunit C (106 aa).

The protein belongs to the GatC family. Heterotrimer of A, B and C subunits.

The enzyme catalyses L-glutamyl-tRNA(Gln) + L-glutamine + ATP + H2O = L-glutaminyl-tRNA(Gln) + L-glutamate + ADP + phosphate + H(+). It carries out the reaction L-aspartyl-tRNA(Asn) + L-glutamine + ATP + H2O = L-asparaginyl-tRNA(Asn) + L-glutamate + ADP + phosphate + 2 H(+). Allows the formation of correctly charged Asn-tRNA(Asn) or Gln-tRNA(Gln) through the transamidation of misacylated Asp-tRNA(Asn) or Glu-tRNA(Gln) in organisms which lack either or both of asparaginyl-tRNA or glutaminyl-tRNA synthetases. The reaction takes place in the presence of glutamine and ATP through an activated phospho-Asp-tRNA(Asn) or phospho-Glu-tRNA(Gln). The chain is Aspartyl/glutamyl-tRNA(Asn/Gln) amidotransferase subunit C from Lactiplantibacillus plantarum (strain ATCC BAA-793 / NCIMB 8826 / WCFS1) (Lactobacillus plantarum).